The chain runs to 136 residues: Large ribosomal subunit protein uL16 (136 aa).

The protein belongs to the universal ribosomal protein uL16 family. As to quaternary structure, part of the 50S ribosomal subunit.

In terms of biological role, binds 23S rRNA and is also seen to make contacts with the A and possibly P site tRNAs. In Wigglesworthia glossinidia brevipalpis, this protein is Large ribosomal subunit protein uL16.